The primary structure comprises 926 residues: Serine/threonine-protein kinase/endoribonuclease IRE2 (926 aa).

The signal sequence occupies residues 1–34 (MASAVRGSRPWPRLGLQLQFAALLLGTLSPQVHT). Topologically, residues 35–430 (LRPENLLLVS…TPDSYLGLGP (396 aa)) are lumenal. The helical transmembrane segment at 431–451 (QDLLAASLTAVLLGGWILFVM) threads the bilayer. The Cytoplasmic portion of the chain corresponds to 452–926 (RQQQPQVVEK…RRPCPGATGR (475 aa)). The segment covering 478–501 (DAQSLHSGASRRSQKRLQSPSKQA) has biased composition (polar residues). The segment at 478 to 509 (DAQSLHSGASRRSQKRLQSPSKQAQPLDDPEA) is disordered. Residues 520–781 (FNPKDVLGRG…APQVLAHPFF (262 aa)) form the Protein kinase domain. Residues 526-534 (LGRGAGGTF) and lysine 548 each bind ATP. Aspartate 637 serves as the catalytic Proton acceptor. The KEN domain maps to 784 to 912 (RAKQLQFFQD…ESLFLPYYPP (129 aa)).

Belongs to the protein kinase superfamily. Ser/Thr protein kinase family. It depends on Mg(2+) as a cofactor. Post-translationally, autophosphorylated.

It is found in the endoplasmic reticulum membrane. It carries out the reaction L-seryl-[protein] + ATP = O-phospho-L-seryl-[protein] + ADP + H(+). The catalysed reaction is L-threonyl-[protein] + ATP = O-phospho-L-threonyl-[protein] + ADP + H(+). With respect to regulation, the kinase domain is activated by trans-autophosphorylation. Kinase activity is required for activation of the endoribonuclease domain. Induces translational repression through 28S ribosomal RNA cleavage in response to ER stress. Pro-apoptotic. Appears to play no role in the unfolded-protein response, unlike closely related proteins. The sequence is that of Serine/threonine-protein kinase/endoribonuclease IRE2 from Homo sapiens (Human).